A 144-amino-acid polypeptide reads, in one-letter code: uncharacterized protein (144 aa).

The 108-residue stretch at 4 to 111 folds into the HIT domain; it reads VFCAIIAGEA…LPPRNGDKLS (108 aa). A Histidine triad motif motif is present at residues 96 to 100; it reads HVHLH.

This is an uncharacterized protein from Mycobacterium tuberculosis (strain CDC 1551 / Oshkosh).